A 151-amino-acid chain; its full sequence is Cytochrome c-type biogenesis protein CcmE (151 aa).

At 1-8 (MNPLRKKR) the chain is on the cytoplasmic side. Residues 9 to 29 (LLIILAILVGVGIAVGLALSA) traverse the membrane as a helical; Signal-anchor for type II membrane protein segment. At 30–151 (LKENINLFYT…QSAPTPAKEG (122 aa)) the chain is on the periplasmic side. H124 and Y128 together coordinate heme. A disordered region spans residues 131–151 (PEVTKALKDSGQSAPTPAKEG).

It belongs to the CcmE/CycJ family.

It localises to the cell inner membrane. In terms of biological role, heme chaperone required for the biogenesis of c-type cytochromes. Transiently binds heme delivered by CcmC and transfers the heme to apo-cytochromes in a process facilitated by CcmF and CcmH. In Pseudomonas fluorescens (strain ATCC BAA-477 / NRRL B-23932 / Pf-5), this protein is Cytochrome c-type biogenesis protein CcmE.